A 378-amino-acid chain; its full sequence is Ribosomal RNA large subunit methyltransferase G (378 aa).

The protein belongs to the methyltransferase superfamily. RlmG family.

It is found in the cytoplasm. The catalysed reaction is guanosine(1835) in 23S rRNA + S-adenosyl-L-methionine = N(2)-methylguanosine(1835) in 23S rRNA + S-adenosyl-L-homocysteine + H(+). Specifically methylates the guanine in position 1835 (m2G1835) of 23S rRNA. The chain is Ribosomal RNA large subunit methyltransferase G from Salmonella agona (strain SL483).